Here is a 180-residue protein sequence, read N- to C-terminus: ATP-dependent protease subunit HslV (180 aa).

The active site involves Thr-2. Na(+) contacts are provided by Gly-157, Cys-160, and Thr-163.

The protein belongs to the peptidase T1B family. HslV subfamily. A double ring-shaped homohexamer of HslV is capped on each side by a ring-shaped HslU homohexamer. The assembly of the HslU/HslV complex is dependent on binding of ATP.

The protein localises to the cytoplasm. It carries out the reaction ATP-dependent cleavage of peptide bonds with broad specificity.. Allosterically activated by HslU binding. Functionally, protease subunit of a proteasome-like degradation complex believed to be a general protein degrading machinery. The protein is ATP-dependent protease subunit HslV of Tolumonas auensis (strain DSM 9187 / NBRC 110442 / TA 4).